The primary structure comprises 739 residues: Catalase-peroxidase 2 (739 aa).

Residues 1 to 26 form the signal peptide; it reads MKKSTIPSMSALTLAMSLAFGGAAIA. Positions 105–227 form a cross-link, tryptophyl-tyrosyl-methioninium (Trp-Tyr) (with M-253); that stretch reads WHSAGVYRIF…MGATQMGLIY (123 aa). The active-site Proton acceptor is histidine 106. The tryptophyl-tyrosyl-methioninium (Tyr-Met) (with W-105) cross-link spans 227–253; it reads YVNPEGPNGVPDPLASAKEIRDTFGRM. Histidine 268 is a binding site for heme b.

It belongs to the peroxidase family. Peroxidase/catalase subfamily. In terms of assembly, homodimer or homotetramer. Heme b serves as cofactor. In terms of processing, formation of the three residue Trp-Tyr-Met cross-link is important for the catalase, but not the peroxidase activity of the enzyme.

It carries out the reaction H2O2 + AH2 = A + 2 H2O. It catalyses the reaction 2 H2O2 = O2 + 2 H2O. Functionally, bifunctional enzyme with both catalase and broad-spectrum peroxidase activity. This Shewanella sp. (strain ANA-3) protein is Catalase-peroxidase 2.